The primary structure comprises 1481 residues: Cystic fibrosis transmembrane conductance regulator (1481 aa).

Residues 1 to 77 (MQRSPLEKAS…KLINALRRCF (77 aa)) lie on the Cytoplasmic side of the membrane. Residues 78-98 (FWRFMFYGILLYLGEVTKAVQ) traverse the membrane as a helical segment. The ABC transmembrane type-1 1 domain occupies 81-365 (FMFYGILLYL…WAVQTWYDSL (285 aa)). The Extracellular portion of the chain corresponds to 99-122 (PLLLGRIIASYDPDNKVERSIAIY). The helical transmembrane segment at 123-146 (LGIGLCLLFIVRMLLLHPAIFGLH) threads the bilayer. Topologically, residues 147–195 (HIGMQMRIAMFSLIYKKILKLSSRVLDKISIGQLVSLLSNNLNKFDEGL) are cytoplasmic. The chain crosses the membrane as a helical span at residues 196 to 216 (ALAHFVWIAPLQVMLLMGLLW). Topologically, residues 217-222 (ELLQAS) are extracellular. A helical transmembrane segment spans residues 223–243 (AFCGLGFLIVLALFQSGLGRM). Residues 244–298 (MMKYRDQRAGKINERLVITSEMIENIQSVKAYCWEEAMEKMIENLRQTELKLTRK) lie on the Cytoplasmic side of the membrane. A helical membrane pass occupies residues 299–319 (AAYVRYFNSSAFFFSGFFVVF). Over 320 to 339 (LSVLPYALIKGIILRKIFTT) the chain is Extracellular. A helical membrane pass occupies residues 340–358 (ISFCIVLRMAVTRQFPWAV). Over 359-858 (QTWYDSLGAI…YLRYITVHKS (500 aa)) the chain is Cytoplasmic. Residues tryptophan 401, 458-465 (GSTGAGKT), and glutamine 493 contribute to the ATP site. The ABC transporter 1 domain occupies 423 to 646 (NGDNSLFFSN…RPDFSSKLMG (224 aa)). Cysteine 524 carries S-palmitoyl cysteine lipidation. 2 positions are modified to phosphoserine: serine 549 and serine 660. A disordered R region region spans residues 654-831 (SAERRNSILT…EEINEEDLKE (178 aa)). Position 670 is a phosphoserine; by PKA (serine 670). Serine 686 bears the Phosphoserine mark. Lysine 688 participates in a covalent cross-link: Glycyl lysine isopeptide (Lys-Gly) (interchain with G-Cter in ubiquitin). Phosphoserine is present on residues serine 700 and serine 712. At threonine 717 the chain carries Phosphothreonine. Serine 737, serine 768, serine 790, serine 795, and serine 813 each carry phosphoserine. The chain crosses the membrane as a helical span at residues 859–879 (LIFVLIWCLVIFLAEVAVSLV). The 297-residue stretch at 859-1155 (LIFVLIWCLV…AVNSSIDVDS (297 aa)) folds into the ABC transmembrane type-1 2 domain. Residues 880–918 (LLWLLGNAPAYNKGNSTISANSSYAVIITSTSAYYVFYI) are Extracellular-facing. Asparagine 894 and asparagine 900 each carry an N-linked (GlcNAc...) asparagine glycan. A discontinuously helical transmembrane segment spans residues 919–939 (YVGVADTLLALGFFRGLPLVH). Over 940 to 990 (TLITVSKILHHKMLHSVLQAPMSTLNALKAGGILNRFSKDIAILDDLLPLT) the chain is Cytoplasmic. A helical transmembrane segment spans residues 991 to 1011 (IFDFIQLLLIVIGAVAVVSVL). The Extracellular portion of the chain corresponds to 1012-1013 (QP). The chain crosses the membrane as a helical span at residues 1014-1034 (YIFLATVPVIVTFIILRAYFL). The Cytoplasmic portion of the chain corresponds to 1035–1095 (HTSQQLKQLE…TANWFLYLST (61 aa)). The chain crosses the membrane as a helical span at residues 1096–1116 (LRWFQMRIEMVFVIFFIVVTF). Over 1117–1130 (ISILTTGEGEGQVG) the chain is Extracellular. A helical transmembrane segment spans residues 1131–1151 (IILTLAMNIMGTLQWAVNSSI). The Cytoplasmic segment spans residues 1152 to 1481 (DVDSLMRSVS…TEEEVQDTRL (330 aa)). The ABC transporter 2 domain occupies 1211–1444 (MTVKDLTARY…KSLFRQAISP (234 aa)). ATP-binding positions include tyrosine 1220 and 1245 to 1252 (GRTGSGKS). Residues 1387-1481 (RTLKQAFADC…TEEEVQDTRL (95 aa)) form an interaction with GORASP2 region. Cysteine 1396 carries S-palmitoyl cysteine lipidation. Residues serine 1445 and serine 1457 each carry the phosphoserine modification. The segment at 1449–1481 (KLFPRRNSSKHKSRPPITALKEETEEEVQDTRL) is disordered. The span at 1450–1462 (LFPRRNSSKHKSR) shows a compositional bias: basic residues. Residues 1471-1481 (ETEEEVQDTRL) are compositionally biased toward acidic residues. The PDZ-binding signature appears at 1479 to 1481 (TRL).

Belongs to the ABC transporter superfamily. ABCC family. CFTR transporter (TC 3.A.1.202) subfamily. As to quaternary structure, monomer; does not require oligomerization for channel activity. May form oligomers in the membrane. Interacts with SLC26A3, SLC26A6 and NHERF1. Interacts with SHANK2. Interacts with MYO6. Interacts (via C-terminus) with GOPC (via PDZ domain); this promotes CFTR internalization and thereby decreases channel activity. Interacts with SLC4A7 through NHERF1. Found in a complex with MYO5B and RAB11A. Interacts with ANO1. Interacts with SLC26A8. Interacts with AHCYL1; the interaction increases CFTR activity. Interacts with CSE1L. The core-glycosylated form interacts with GORASP2 (via PDZ GRASP-type 1 domain) in respone to ER stress. Interacts with MARCHF2; the interaction leads to CFTR ubiqtuitination and degradation. Interacts with ADGRG2. In terms of processing, N-glycosylated. Post-translationally, phosphorylated; cAMP treatment promotes phosphorylation and activates the channel. Dephosphorylation decreases the ATPase activity (in vitro). Phosphorylation at PKA sites activates the channel. Phosphorylation at PKC sites enhances the response to phosphorylation by PKA. Phosphorylated by AMPK; this inhibits channel activity. Ubiquitinated, leading to its degradation in the lysosome. Deubiquitination by USP10 in early endosomes enhances its endocytic recycling to the cell membrane. Ubiquitinated by RNF185 during ER stress. Ubiquitinated by MARCHF2.

Its subcellular location is the apical cell membrane. The protein resides in the early endosome membrane. It localises to the cell membrane. The protein localises to the recycling endosome membrane. It is found in the endoplasmic reticulum membrane. Its subcellular location is the nucleus. The enzyme catalyses ATP + H2O + closed Cl(-) channel = ADP + phosphate + open Cl(-) channel.. It catalyses the reaction chloride(in) = chloride(out). It carries out the reaction hydrogencarbonate(in) = hydrogencarbonate(out). The catalysed reaction is ATP + H2O = ADP + phosphate + H(+). Functionally, epithelial ion channel that plays an important role in the regulation of epithelial ion and water transport and fluid homeostasis. Mediates the transport of chloride ions across the cell membrane. Possesses an intrinsic ATPase activity and utilizes ATP to gate its channel; the passive flow of anions through the channel is gated by cycles of ATP binding and hydrolysis by the ATP-binding domains. The ion channel is also permeable to HCO(3)(-); selectivity depends on the extracellular chloride concentration. Exerts its function also by modulating the activity of other ion channels and transporters. Contributes to the regulation of the pH and the ion content of the epithelial fluid layer. Modulates the activity of the epithelial sodium channel (ENaC) complex, in part by regulating the cell surface expression of the ENaC complex. May regulate bicarbonate secretion and salvage in epithelial cells by regulating the transporter SLC4A7. Can inhibit the chloride channel activity of ANO1. Plays a role in the chloride and bicarbonate homeostasis during sperm epididymal maturation and capacitation. This is Cystic fibrosis transmembrane conductance regulator from Microcebus murinus (Gray mouse lemur).